The chain runs to 336 residues: Ornithine carbamoyltransferase, catabolic (336 aa).

Carbamoyl phosphate-binding positions include 62 to 65 (STRT), Q89, R113, and 140 to 143 (HPTQ). Residues N172, D236, and 240 to 241 (SM) each bind L-ornithine. Carbamoyl phosphate contacts are provided by residues 277 to 278 (CL) and R322.

Belongs to the aspartate/ornithine carbamoyltransferase superfamily. OTCase family.

The protein resides in the cytoplasm. It catalyses the reaction carbamoyl phosphate + L-ornithine = L-citrulline + phosphate + H(+). It functions in the pathway amino-acid degradation; L-arginine degradation via ADI pathway; carbamoyl phosphate from L-arginine: step 2/2. Its function is as follows. Reversibly catalyzes the transfer of the carbamoyl group from carbamoyl phosphate (CP) to the N(epsilon) atom of ornithine (ORN) to produce L-citrulline. This is Ornithine carbamoyltransferase, catabolic from Staphylococcus aureus (strain MSSA476).